Here is a 69-residue protein sequence, read N- to C-terminus: Pleurain-A1 (69 aa).

The N-terminal stretch at 1–18 (MFTLKKTLLLLFFLGTIS) is a signal peptide. Positions 19–43 (ISLCKQERDADEDDGRKMTEEEVKR) are excised as a propeptide. The cysteines at positions 63 and 69 are disulfide-linked.

As to expression, expressed by the skin glands.

The protein resides in the secreted. Its function is as follows. Antimicrobial peptide. Has activity against the Gram-positive bacterium S.aureus ATCC2592 (MIC=15 ug/ml), the Gram-negative bacteria E.coli ATCC25922 (MIC=60 ug/ml), B.dysenteriae (MIC=120 ug/ml), H.pylori NTCT11637 (MIC=30 ug/ml), and the fungus C.albicans ATCC2002 (MIC=30 ug/ml). Has little hemolytic activity on rabbit red blood cells. This is Pleurain-A1 from Nidirana pleuraden (Yunnan pond frog).